The following is a 117-amino-acid chain: uncharacterized protein (117 aa).

A helical membrane pass occupies residues 76-96; the sequence is FIMSSGCFLIASLSCVGLTVF.

It is found in the membrane. This is an uncharacterized protein from Saccharomyces cerevisiae (strain ATCC 204508 / S288c) (Baker's yeast).